We begin with the raw amino-acid sequence, 972 residues long: Protein NRDE2 homolog (972 aa).

The span at 1–17 shows a compositional bias: polar residues; sequence MPSNHNTSVPKFSSFNS. Positions 1 to 61 are disordered; that stretch reads MPSNHNTSVP…RSIQSNFAVD (61 aa). The span at 19-33 shows a compositional bias: basic residues; that stretch reads KAKKNPITKSNKKYR. The span at 37–59 shows a compositional bias: polar residues; that stretch reads DQVSSNHAKSSFPSHRSIQSNFA. 7 HAT repeats span residues 159 to 191, 250 to 282, 318 to 350, 355 to 386, 608 to 640, 788 to 820, and 860 to 894; these read LNIL…YQER, WSKE…YFTG, TDVT…YELA, QANM…FWNS, EEKP…LEHL, YNLP…FESK, and TNSQ…ILNL. Position 970 is a phosphoserine (S970).

This sequence belongs to the NRDE2 family.

The protein resides in the nucleus. This chain is Protein NRDE2 homolog, found in Schizosaccharomyces pombe (strain 972 / ATCC 24843) (Fission yeast).